The following is a 405-amino-acid chain: Argininosuccinate synthase (405 aa).

Residue 11–19 (AYSGGLDTS) coordinates ATP. Residue tyrosine 90 coordinates L-citrulline. ATP is bound at residue glycine 119. L-aspartate contacts are provided by threonine 121, asparagine 125, and aspartate 126. Asparagine 125 serves as a coordination point for L-citrulline. Arginine 129, serine 178, serine 187, glutamate 263, and tyrosine 275 together coordinate L-citrulline.

It belongs to the argininosuccinate synthase family. Type 1 subfamily. As to quaternary structure, homotetramer.

The protein resides in the cytoplasm. It carries out the reaction L-citrulline + L-aspartate + ATP = 2-(N(omega)-L-arginino)succinate + AMP + diphosphate + H(+). The protein operates within amino-acid biosynthesis; L-arginine biosynthesis; L-arginine from L-ornithine and carbamoyl phosphate: step 2/3. In Legionella pneumophila (strain Corby), this protein is Argininosuccinate synthase.